The following is a 193-amino-acid chain: p53 apoptosis effector related to PMP-22 (193 aa).

4 helical membrane-spanning segments follow: residues 12 to 32 (RWIL…ALAG), 81 to 101 (LFCG…ALCG), 110 to 130 (VIGG…VIYP), and 151 to 171 (WAYG…FFFC).

It belongs to the TMEM47 family. Expressed in the stratified squamous skin epithelium of the skin and the tongue, but not in simple epithelia (at protein level). Expressed in the oral epithelium, tongue epithelium and skin (at protein level). More abundant in areas of lower flow stress in the inner curvature compared to the outer curvature regions of the aorta (at protein level). Expressed in luminal cells and myoepithelium cells of the mammary epithelium (at protein level). Expression increases during the early stages of pregnancy before decreasing before birth, expression continues to be weak during involution which mirrors decreased desmosome abundance and organization at these time points (at protein level). Expressed by epithelial cells at the mucosal surface in the proximal colon (at protein level). Expressed in apoptotic cells.

The protein localises to the cell junction. The protein resides in the desmosome. It localises to the cell membrane. Its subcellular location is the cytoplasm. Component of intercellular desmosome junctions. Plays a role in stratified epithelial integrity and cell-cell adhesion by promoting desmosome assembly. Thereby plays a role in barrier function of the skin against infection. Plays a role in mammary epithelial tissue homeostasis and remodeling during and after pregnancy, potentially via its involvement in desmosome cell-cell junctions. Required for tooth enamel development via facilitating desmosome-mediated ameloblast adhesion to the stratum intermedium during the transitional stage of amelogenesis. May also play a role in downstream transcriptional regulation of other genes involved in amelogenesis such as AMBN, ENAM, MMP20 and KLK4. Plays a role as an effector in the TP53-dependent apoptotic pathway. Positively regulates apoptosis in T-helper 17 (Th17) cell populations via caspase-dependent signaling. Promotes neutrophil transepithelial migration in response to chemoattractants such as hepoxilin A3 (HXA3), N-Formylmethionyl-leucyl-phenylalanine (fMLP) and CXCL8/IL-8. May act as a positive regulator of endothelial cell apoptosis in response to blood flow-derived shear stress. The polypeptide is p53 apoptosis effector related to PMP-22 (Mus musculus (Mouse)).